Reading from the N-terminus, the 254-residue chain is Phosphoglycerate mutase 1 (254 aa).

Substrate-binding positions include 10–17 and 23–24; these read RHGESAWN and SG. Histidine 11 functions as the Tele-phosphohistidine intermediate in the catalytic mechanism. 2 positions are modified to phosphoserine: serine 14 and serine 23. Tyrosine 26 is modified (phosphotyrosine). At serine 31 the chain carries Phosphoserine. Substrate-binding positions include arginine 62, 89–92, and lysine 100; that span reads ERHY. Glutamate 89 acts as the Proton donor/acceptor in catalysis. Residue lysine 106 is modified to N6-acetyllysine. A substrate-binding site is contributed by 116–117; sequence RR. Position 118 is a phosphoserine (serine 118). 187–188 is a substrate binding site; that stretch reads GN. An N6-acetyllysine; alternate modification is found at lysine 251. The residue at position 251 (lysine 251) is an N6-succinyllysine; alternate. N6-acetyllysine is present on residues lysine 253 and lysine 254.

It belongs to the phosphoglycerate mutase family. BPG-dependent PGAM subfamily. Homodimer. In terms of processing, acetylated at Lys-253, Lys-253 and Lys-254 under high glucose condition. Acetylation increases catalytic activity. Under glucose restriction SIRT1 levels dramatically increase and it deacetylates the enzyme. As to expression, expressed in the liver and brain. Not found in the muscle.

The catalysed reaction is (2R)-2-phosphoglycerate = (2R)-3-phosphoglycerate. It catalyses the reaction (2R)-3-phospho-glyceroyl phosphate = (2R)-2,3-bisphosphoglycerate + H(+). In terms of biological role, catalyzes the interconversion of 2-phosphoglycerate and 3-phosphoglyceratea crucial step in glycolysis, by using 2,3-bisphosphoglycerate. Also catalyzes the interconversion of (2R)-2,3-bisphosphoglycerate and (2R)-3-phospho-glyceroyl phosphate. The sequence is that of Phosphoglycerate mutase 1 from Homo sapiens (Human).